Reading from the N-terminus, the 206-residue chain is FMN-dependent NADH:quinone oxidoreductase 1 (206 aa).

Residues Ser9, 15 to 17 (SVS), and 139 to 142 (SRGG) contribute to the FMN site.

This sequence belongs to the azoreductase type 1 family. Homodimer. FMN serves as cofactor.

It catalyses the reaction 2 a quinone + NADH + H(+) = 2 a 1,4-benzosemiquinone + NAD(+). The catalysed reaction is N,N-dimethyl-1,4-phenylenediamine + anthranilate + 2 NAD(+) = 2-(4-dimethylaminophenyl)diazenylbenzoate + 2 NADH + 2 H(+). Quinone reductase that provides resistance to thiol-specific stress caused by electrophilic quinones. Functionally, also exhibits azoreductase activity. Catalyzes the reductive cleavage of the azo bond in aromatic azo compounds to the corresponding amines. The protein is FMN-dependent NADH:quinone oxidoreductase 1 of Cupriavidus pinatubonensis (strain JMP 134 / LMG 1197) (Cupriavidus necator (strain JMP 134)).